We begin with the raw amino-acid sequence, 357 residues long: UDP-N-acetylglucosamine--N-acetylmuramyl-(pentapeptide) pyrophosphoryl-undecaprenol N-acetylglucosamine transferase (357 aa).

UDP-N-acetyl-alpha-D-glucosamine is bound by residues 12-14 (TAG), Arg-166, Ser-196, and Gln-291.

Belongs to the glycosyltransferase 28 family. MurG subfamily.

The protein resides in the cell membrane. The catalysed reaction is di-trans,octa-cis-undecaprenyl diphospho-N-acetyl-alpha-D-muramoyl-L-alanyl-D-glutamyl-meso-2,6-diaminopimeloyl-D-alanyl-D-alanine + UDP-N-acetyl-alpha-D-glucosamine = di-trans,octa-cis-undecaprenyl diphospho-[N-acetyl-alpha-D-glucosaminyl-(1-&gt;4)]-N-acetyl-alpha-D-muramoyl-L-alanyl-D-glutamyl-meso-2,6-diaminopimeloyl-D-alanyl-D-alanine + UDP + H(+). The protein operates within cell wall biogenesis; peptidoglycan biosynthesis. In terms of biological role, cell wall formation. Catalyzes the transfer of a GlcNAc subunit on undecaprenyl-pyrophosphoryl-MurNAc-pentapeptide (lipid intermediate I) to form undecaprenyl-pyrophosphoryl-MurNAc-(pentapeptide)GlcNAc (lipid intermediate II). This chain is UDP-N-acetylglucosamine--N-acetylmuramyl-(pentapeptide) pyrophosphoryl-undecaprenol N-acetylglucosamine transferase, found in Geobacillus kaustophilus (strain HTA426).